Here is a 1076-residue protein sequence, read N- to C-terminus: Inositol-1,4,5-trisphosphate 5-phosphatase 1 (1076 aa).

One can recognise an SAC domain in the interval 144–474; that stretch reads LRKLLTNGSF…GDALARIYTG (331 aa). Residues 534-880 are catalytic; sequence YDPIHEYVNH…QEVRDASQTS (347 aa). Disordered stretches follow at residues 930–958 and 977–1076; these read AAPP…DWIS and LSPA…KPLV. Composition is skewed to low complexity over residues 977–1004 and 1025–1040; these read LSPA…IKPN and SGSS…LTPV. Over residues 1065–1076 the composition is skewed to polar residues; the sequence is PEESSISWKPLV.

Belongs to the synaptojanin family. This sequence in the central section; belongs to the inositol 1,4,5-trisphosphate 5-phosphatase family. It depends on Mg(2+) as a cofactor.

The protein resides in the cytoplasm. It carries out the reaction a 1,2-diacyl-sn-glycero-3-phospho-(1D-myo-inositol-4,5-bisphosphate) + H2O = a 1,2-diacyl-sn-glycero-3-phospho-(1D-myo-inositol 4-phosphate) + phosphate. Its function is as follows. Controls the cellular levels and subcellular distribution of phosphatidylinositol 3-phosphate and phosphatidylinositol 4,5-bisphosphate. Involved in distinct membrane trafficking and signal transduction pathways. Highly active against a range of soluble and lipid inositol phosphates. Active in dephosphorylating the 5-position of Ins(1,4,5)P3 and Ins(1,3,4,5)P4 and to a lesser extent Ins(1,4,5,6)P4. The enzyme is also active against PI(4,5)P2 presented in sonicated vesicles and Triton mixed micelles, and somewhat less active against PI(3,5)P2 in unilamellar vesicles. Activity against PI(3,5)P2 drops sharply when this substrate is presented in mixed micelles. Also hydrolyzes PIP3 to produce PI(3,4)P2. In Schizosaccharomyces pombe (strain 972 / ATCC 24843) (Fission yeast), this protein is Inositol-1,4,5-trisphosphate 5-phosphatase 1 (syj1).